The primary structure comprises 288 residues: Phytanoyl-CoA dioxygenase domain-containing protein 1 homolog (288 aa).

Residues K95, M134, 149–151 (HVD), and W167 contribute to the 2-oxoglutarate site. Residues H149 and D151 each contribute to the Fe cation site. Position 242 (H242) interacts with Fe cation. 2-oxoglutarate is bound by residues S244 and R253.

The protein belongs to the PhyH family. PHYHD1 subfamily. The cofactor is Fe cation.

Has alpha-ketoglutarate-dependent dioxygenase activity. Does not show detectable activity towards fatty acid CoA thioesters. Is not expected to be active with phytanoyl CoA. This is Phytanoyl-CoA dioxygenase domain-containing protein 1 homolog from Caenorhabditis elegans.